A 117-amino-acid chain; its full sequence is Large ribosomal subunit protein eL34 (117 aa).

It belongs to the eukaryotic ribosomal protein eL34 family. In terms of assembly, component of the large ribosomal subunit.

It localises to the cytoplasm. It is found in the cytosol. Its subcellular location is the endoplasmic reticulum. Functionally, component of the large ribosomal subunit. The ribosome is a large ribonucleoprotein complex responsible for the synthesis of proteins in the cell. The protein is Large ribosomal subunit protein eL34 (rpl34) of Danio rerio (Zebrafish).